The chain runs to 434 residues: Trigger factor (434 aa).

Positions 160-245 (GDKVKMNFVG…LTEVQAANLP (86 aa)) constitute a PPIase FKBP-type domain.

This sequence belongs to the FKBP-type PPIase family. Tig subfamily.

It localises to the cytoplasm. The catalysed reaction is [protein]-peptidylproline (omega=180) = [protein]-peptidylproline (omega=0). Involved in protein export. Acts as a chaperone by maintaining the newly synthesized protein in an open conformation. Functions as a peptidyl-prolyl cis-trans isomerase. The sequence is that of Trigger factor from Shewanella sp. (strain W3-18-1).